A 269-amino-acid polypeptide reads, in one-letter code: Cytochrome c oxidase subunit 3 (269 aa).

A run of 7 helical transmembrane segments spans residues 21–41 (PWPI…ALAM), 45–65 (IGNM…ATLW), 90–110 (GFLL…WAYF), 138–160 (PLLN…HALI), 167–187 (ALSG…CQYI), 205–225 (FYAG…MLAI), and 247–267 (VIYL…FYWW).

This sequence belongs to the cytochrome c oxidase subunit 3 family. Component of the cytochrome c oxidase (complex IV, CIV), a multisubunit enzyme composed of a catalytic core of 3 subunits and several supernumerary subunits. The complex exists as a monomer or a dimer and forms supercomplexes (SCs) in the inner mitochondrial membrane with ubiquinol-cytochrome c oxidoreductase (cytochrome b-c1 complex, complex III, CIII).

It localises to the mitochondrion inner membrane. The enzyme catalyses 4 Fe(II)-[cytochrome c] + O2 + 8 H(+)(in) = 4 Fe(III)-[cytochrome c] + 2 H2O + 4 H(+)(out). In terms of biological role, component of the cytochrome c oxidase, the last enzyme in the mitochondrial electron transport chain which drives oxidative phosphorylation. The respiratory chain contains 3 multisubunit complexes succinate dehydrogenase (complex II, CII), ubiquinol-cytochrome c oxidoreductase (cytochrome b-c1 complex, complex III, CIII) and cytochrome c oxidase (complex IV, CIV), that cooperate to transfer electrons derived from NADH and succinate to molecular oxygen, creating an electrochemical gradient over the inner membrane that drives transmembrane transport and the ATP synthase. Cytochrome c oxidase is the component of the respiratory chain that catalyzes the reduction of oxygen to water. Electrons originating from reduced cytochrome c in the intermembrane space (IMS) are transferred via the dinuclear copper A center (CU(A)) of subunit 2 and heme A of subunit 1 to the active site in subunit 1, a binuclear center (BNC) formed by heme A3 and copper B (CU(B)). The BNC reduces molecular oxygen to 2 water molecules using 4 electrons from cytochrome c in the IMS and 4 protons from the mitochondrial matrix. This is Cytochrome c oxidase subunit 3 (COX3) from Lachancea kluyveri (strain ATCC 58438 / CBS 3082 / BCRC 21498 / NBRC 1685 / JCM 7257 / NCYC 543 / NRRL Y-12651) (Yeast).